The chain runs to 92 residues: Small ribosomal subunit protein uS19 (92 aa).

This sequence belongs to the universal ribosomal protein uS19 family.

Protein S19 forms a complex with S13 that binds strongly to the 16S ribosomal RNA. The polypeptide is Small ribosomal subunit protein uS19 (Shewanella putrefaciens (strain CN-32 / ATCC BAA-453)).